The primary structure comprises 347 residues: Nicotinate-nucleotide--dimethylbenzimidazole phosphoribosyltransferase (347 aa).

The active-site Proton acceptor is E316.

This sequence belongs to the CobT family.

The catalysed reaction is 5,6-dimethylbenzimidazole + nicotinate beta-D-ribonucleotide = alpha-ribazole 5'-phosphate + nicotinate + H(+). It functions in the pathway nucleoside biosynthesis; alpha-ribazole biosynthesis; alpha-ribazole from 5,6-dimethylbenzimidazole: step 1/2. Catalyzes the synthesis of alpha-ribazole-5'-phosphate from nicotinate mononucleotide (NAMN) and 5,6-dimethylbenzimidazole (DMB). The sequence is that of Nicotinate-nucleotide--dimethylbenzimidazole phosphoribosyltransferase from Vibrio parahaemolyticus serotype O3:K6 (strain RIMD 2210633).